The following is a 414-amino-acid chain: Esterase FrsA (414 aa).

This sequence belongs to the FrsA family.

The enzyme catalyses a carboxylic ester + H2O = an alcohol + a carboxylate + H(+). Functionally, catalyzes the hydrolysis of esters. The sequence is that of Esterase FrsA from Enterobacter sp. (strain 638).